Reading from the N-terminus, the 342-residue chain is Glucokinase (342 aa).

Residue 7–12 coordinates ATP; sequence GDIGGT.

It belongs to the bacterial glucokinase family.

It localises to the cytoplasm. The catalysed reaction is D-glucose + ATP = D-glucose 6-phosphate + ADP + H(+). This is Glucokinase from Nostoc sp. (strain PCC 7120 / SAG 25.82 / UTEX 2576).